The chain runs to 122 residues: Ribosomal protein eL22-like (122 aa).

Ser-112, Ser-118, and Ser-120 each carry phosphoserine.

It belongs to the eukaryotic ribosomal protein eL22 family.

The chain is Ribosomal protein eL22-like (RPL22L1) from Bos taurus (Bovine).